Consider the following 243-residue polypeptide: Biosynthetic peptidoglycan transglycosylase (243 aa).

Residues 21–43 (LLIVSLVSALMSVLQVIVFRFVD) form a helical membrane-spanning segment.

It belongs to the glycosyltransferase 51 family.

The protein localises to the cell inner membrane. It catalyses the reaction [GlcNAc-(1-&gt;4)-Mur2Ac(oyl-L-Ala-gamma-D-Glu-L-Lys-D-Ala-D-Ala)](n)-di-trans,octa-cis-undecaprenyl diphosphate + beta-D-GlcNAc-(1-&gt;4)-Mur2Ac(oyl-L-Ala-gamma-D-Glu-L-Lys-D-Ala-D-Ala)-di-trans,octa-cis-undecaprenyl diphosphate = [GlcNAc-(1-&gt;4)-Mur2Ac(oyl-L-Ala-gamma-D-Glu-L-Lys-D-Ala-D-Ala)](n+1)-di-trans,octa-cis-undecaprenyl diphosphate + di-trans,octa-cis-undecaprenyl diphosphate + H(+). Its pathway is cell wall biogenesis; peptidoglycan biosynthesis. Its function is as follows. Peptidoglycan polymerase that catalyzes glycan chain elongation from lipid-linked precursors. The sequence is that of Biosynthetic peptidoglycan transglycosylase from Xylella fastidiosa (strain M12).